The sequence spans 92 residues: Acylphosphatase (92 aa).

Positions 5–92 constitute an Acylphosphatase-like domain; it reads GVTIYVYGRV…EDIADFIVRH (88 aa). Catalysis depends on residues arginine 20 and asparagine 38.

The protein belongs to the acylphosphatase family.

It catalyses the reaction an acyl phosphate + H2O = a carboxylate + phosphate + H(+). In Photorhabdus laumondii subsp. laumondii (strain DSM 15139 / CIP 105565 / TT01) (Photorhabdus luminescens subsp. laumondii), this protein is Acylphosphatase (acyP).